A 328-amino-acid chain; its full sequence is P2Y purinoceptor 6 (328 aa).

Over 1–27 (MERDNGTIQAPGLPPTTCVYREDFKRL) the chain is Extracellular. A glycan (N-linked (GlcNAc...) asparagine) is linked at Asn-5. The helical transmembrane segment at 28–48 (LLPPVYSVVLVVGLPLNVCVI) threads the bilayer. The Cytoplasmic segment spans residues 49–62 (AQICASRRTLTRSA). The chain crosses the membrane as a helical span at residues 63–83 (VYTLNLALADLLYACSLPLLI). Residues 84 to 101 (YNYARGDHWPFGDLACRL) lie on the Extracellular side of the membrane. A disulfide bridge connects residues Cys-99 and Cys-177. Residues 102 to 122 (VRFLFYANLHGSILFLTCISF) form a helical membrane-spanning segment. The Cytoplasmic portion of the chain corresponds to 123–144 (QRYLGICHPLAPWHKRGGRRAA). A helical transmembrane segment spans residues 145–165 (WVVCGVVWLVVTAQCLPTAVF). Topologically, residues 166-194 (AATGIQRNRTVCYDLSPPILSTRYLPYGM) are extracellular. Asn-173 carries an N-linked (GlcNAc...) asparagine glycan. Residues 195–215 (ALTVIGFLLPFTALLACYCRM) form a helical membrane-spanning segment. Over 216–236 (ARRLCRQDGPAGPVAQERRSK) the chain is Cytoplasmic. The helical transmembrane segment at 237-257 (AARMAVVVAAVFVISFLPFHI) threads the bilayer. Topologically, residues 258-280 (TKTAYLAVRSTPGVSCPVLETFA) are extracellular. Residues 281 to 303 (AAYKGTRPFASANSVLDPILFYF) traverse the membrane as a helical segment. The Cytoplasmic segment spans residues 304–328 (TQQKFRRQPHDLLQKLTAKWQRQRV).

This sequence belongs to the G-protein coupled receptor 1 family. In terms of tissue distribution, abundantly expressed in various tissues including lung, stomach, intestine, spleen, mesentery, heart, and, most prominently, aorta.

Its subcellular location is the cell membrane. Its function is as follows. Receptor for extracellular UTP &gt; ADP = 2-methylthio-ATP &gt; ADP-beta-S &gt; ATP = ATP-gamma-S. The activity of this receptor is mediated by G proteins which activate a phosphatidylinositol-calcium second messenger system. Functionally coupled to phospholipase C. This chain is P2Y purinoceptor 6 (P2ry6), found in Rattus norvegicus (Rat).